The following is a 343-amino-acid chain: MKALAKLERGPGLTLTRVKKPEVGHNDVLIKIRRTAICGTDIHIWKWDDWAQKTIPVPMHVGHEYVGEIVEMGQEVRGFSIGDRVSGEGHITCGFCRNCRAGRRHLCRNTVGVGVNREGAFAEYLAIPAFNAFKIPPEISDDLAAIFDPFGNATHTALSFNLVGEDVLITGAGPIGVMAVAIAKHVGARNVVITDINDYRLDLARRMGATRAVNVSRESLRDVMADLHMTEGFDVGLEMSGVPSAFTSLLESMNHGGKVALLGIPPAQTAIDWNQVIFKGLEIKGIYGREMFETWYKMVAMLQSGLDLSPIITHRFAVDDYEKGFAAMLSGESGKVILDWAAA.

Residue C38 participates in Zn(2+) binding. Residues T40 and H43 each act as charge relay system in the active site. Positions 63, 64, 93, 96, 99, and 107 each coordinate Zn(2+). NAD(+)-binding positions include I175, D195, R200, 262–264 (LGI), and 286–287 (IY).

This sequence belongs to the zinc-containing alcohol dehydrogenase family. In terms of assembly, homotetramer. The cofactor is Zn(2+).

Its subcellular location is the cytoplasm. It catalyses the reaction L-threonine + NAD(+) = (2S)-2-amino-3-oxobutanoate + NADH + H(+). Its pathway is amino-acid degradation; L-threonine degradation via oxydo-reductase pathway; glycine from L-threonine: step 1/2. Catalyzes the NAD(+)-dependent oxidation of L-threonine to 2-amino-3-ketobutyrate. The protein is L-threonine 3-dehydrogenase of Burkholderia thailandensis (strain ATCC 700388 / DSM 13276 / CCUG 48851 / CIP 106301 / E264).